A 246-amino-acid polypeptide reads, in one-letter code: Large ribosomal subunit protein uL4 (246 aa).

Residues 37 to 103 (AAQANRKQDY…TEKDRSLDLN (67 aa)) form a disordered region. Over residues 92-103 (PKTEKDRSLDLN) the composition is skewed to basic and acidic residues.

This sequence belongs to the universal ribosomal protein uL4 family. Part of the 50S ribosomal subunit. Interacts weakly with proteins L18e, L24 and L37e. Has been cross-linked to L18e.

Functionally, one of the primary rRNA binding proteins, this protein initially binds near the 5'-end of the 23S rRNA. It is important during the early stages of 50S assembly. Its function is as follows. Makes multiple contacts with different domains of the 23S rRNA in the assembled 50S subunit. In terms of biological role, forms part of the polypeptide exit tunnel, in which it helps forms a bend with protein L22. Contacts the macrolide antibiotic spiramycin in the polypeptide exit tunnel. The protein is Large ribosomal subunit protein uL4 (rpl4) of Haloarcula marismortui (strain ATCC 43049 / DSM 3752 / JCM 8966 / VKM B-1809) (Halobacterium marismortui).